Consider the following 212-residue polypeptide: Adenylate kinase (212 aa).

An ATP-binding site is contributed by 10–15 (GAGKGT). The tract at residues 30 to 59 (STGDMFRAAMVNQTEMGVLAKSYIDKGELV) is NMP. AMP-binding positions include Thr31, Arg36, 57-59 (ELV), 86-89 (GYPR), and Gln93. The tract at residues 127–159 (GRIIHRVTGETFHKVFNPPVDYKEEDYYQREDD) is LID. ATP contacts are provided by residues Arg128 and 137-138 (TF). Arg156 and Arg167 together coordinate AMP. Gln195 contacts ATP.

It belongs to the adenylate kinase family. In terms of assembly, monomer.

The protein resides in the cytoplasm. It carries out the reaction AMP + ATP = 2 ADP. It functions in the pathway purine metabolism; AMP biosynthesis via salvage pathway; AMP from ADP: step 1/1. In terms of biological role, catalyzes the reversible transfer of the terminal phosphate group between ATP and AMP. Plays an important role in cellular energy homeostasis and in adenine nucleotide metabolism. This Streptococcus pneumoniae (strain 70585) protein is Adenylate kinase.